A 177-amino-acid chain; its full sequence is MRAEARAAVGELLEAAGLSPGQVLVVGCSTSEVIGRRIGTAGSEAVAGAILEPLLEATQAAGVHLAVQCCEHLNRALVVERAAAERYDWERVTVVPVPRAGGALAARAMRRLPDAVVVEEIKADAGLDIGLTLIGMHLRRVAVPVRLKTAAIGHARVVAARTRPKLIGGARAVYEMQ.

Belongs to the UPF0340 family.

In Symbiobacterium thermophilum (strain DSM 24528 / JCM 14929 / IAM 14863 / T), this protein is UPF0340 protein STH78.